Consider the following 202-residue polypeptide: Superoxide dismutase [Cu-Zn], chloroplastic (202 aa).

The transit peptide at 1–48 (MASQTLVSPSPLSSHSLLRTSFSGVSVKLAPQFSTLATSNFKPLTVVA) directs the protein to the chloroplast. Cu cation is bound by residues H94, H96, and H111. A disulfide bridge links C105 with C194. Zn(2+) contacts are provided by H111, H119, H128, and D131. Position 168 (H168) interacts with Cu cation.

Belongs to the Cu-Zn superoxide dismutase family. Homotetramer. Requires Cu cation as cofactor. Zn(2+) serves as cofactor.

It is found in the plastid. The protein localises to the chloroplast. The enzyme catalyses 2 superoxide + 2 H(+) = H2O2 + O2. Its function is as follows. Destroys radicals which are normally produced within the cells and which are toxic to biological systems. The chain is Superoxide dismutase [Cu-Zn], chloroplastic (SODCP) from Pisum sativum (Garden pea).